Consider the following 109-residue polypeptide: Large ribosomal subunit protein uL24 (109 aa).

The protein belongs to the universal ribosomal protein uL24 family. As to quaternary structure, part of the 50S ribosomal subunit.

Functionally, one of two assembly initiator proteins, it binds directly to the 5'-end of the 23S rRNA, where it nucleates assembly of the 50S subunit. One of the proteins that surrounds the polypeptide exit tunnel on the outside of the subunit. In Rickettsia africae (strain ESF-5), this protein is Large ribosomal subunit protein uL24.